The primary structure comprises 121 residues: Large ribosomal subunit protein uL22 (121 aa).

It belongs to the universal ribosomal protein uL22 family. In terms of assembly, part of the 50S ribosomal subunit.

This protein binds specifically to 23S rRNA; its binding is stimulated by other ribosomal proteins, e.g. L4, L17, and L20. It is important during the early stages of 50S assembly. It makes multiple contacts with different domains of the 23S rRNA in the assembled 50S subunit and ribosome. Its function is as follows. The globular domain of the protein is located near the polypeptide exit tunnel on the outside of the subunit, while an extended beta-hairpin is found that lines the wall of the exit tunnel in the center of the 70S ribosome. This is Large ribosomal subunit protein uL22 from Paenarthrobacter aurescens (strain TC1).